Here is a 171-residue protein sequence, read N- to C-terminus: NADH-quinone oxidoreductase subunit I 1 (171 aa).

2 consecutive 4Fe-4S ferredoxin-type domains span residues 39 to 71 and 81 to 110; these read IVLT…LSKA and EHFR…LTPD. [4Fe-4S] cluster-binding residues include Cys-51, Cys-54, Cys-57, Cys-61, Cys-90, Cys-93, Cys-96, and Cys-100.

The protein belongs to the complex I 23 kDa subunit family. NDH-1 is composed of 14 different subunits. Subunits NuoA, H, J, K, L, M, N constitute the membrane sector of the complex. [4Fe-4S] cluster is required as a cofactor.

The protein resides in the cell inner membrane. The enzyme catalyses a quinone + NADH + 5 H(+)(in) = a quinol + NAD(+) + 4 H(+)(out). Functionally, NDH-1 shuttles electrons from NADH, via FMN and iron-sulfur (Fe-S) centers, to quinones in the respiratory chain. The immediate electron acceptor for the enzyme in this species is believed to be ubiquinone. Couples the redox reaction to proton translocation (for every two electrons transferred, four hydrogen ions are translocated across the cytoplasmic membrane), and thus conserves the redox energy in a proton gradient. The polypeptide is NADH-quinone oxidoreductase subunit I 1 (Rhodopseudomonas palustris (strain HaA2)).